A 172-amino-acid polypeptide reads, in one-letter code: MFDAFTKVVAQADARGQFISASEIDALAAMVSDSNKRLDAVNRISSNASTIVASAARQLFAQQPSLIAPGGNAYTSRRMAACLRDMEIILRYVTYASFAGDASVLEDRCLNGLRETYLALGTPGASVAAGVNLMKESALAIVNDRAGISAGDCASLSSEIGTYFDRAAAAVA.

The residue at position 72 (N72) is an N4-methylasparagine. Residue C82 participates in (2R,3E)-phycocyanobilin binding. C153 is a (2R,3E)-phycoerythrobilin binding site.

Belongs to the phycobiliprotein family. Heterodimer of an alpha and a beta subunit, which further assembles into trimers and the trimers into hexamers. Contains two covalently linked bilin chromophores.

Its subcellular location is the cellular thylakoid membrane. Its function is as follows. Light-harvesting photosynthetic bile pigment-protein from the phycobiliprotein complex (phycobilisome, PBS). Phycocyanin is the major phycobiliprotein in the PBS rod. This chain is R-phycocyanin beta subunit (rpcB), found in Synechococcus sp. (strain WH7803).